Consider the following 112-residue polypeptide: Large ribosomal subunit protein eL30y (112 aa).

This sequence belongs to the eukaryotic ribosomal protein eL30 family.

The polypeptide is Large ribosomal subunit protein eL30y (RPL30B) (Arabidopsis thaliana (Mouse-ear cress)).